A 410-amino-acid chain; its full sequence is Acyl-CoA-binding domain-containing protein 5-B (410 aa).

The 90-residue stretch at 12–101 (AQKRFEAAVK…IQLIIETLPV (90 aa)) folds into the ACB domain. Residues 23–32 (IRSLPEDGSY), 43–47 (YSYYK), Lys-69, and Tyr-88 each bind an acyl-CoA. Over residues 119–128 (VEDDDDDDDE) the composition is skewed to acidic residues. 3 disordered regions span residues 119-165 (VEDD…LDDY), 221-242 (SDDE…GSGV), and 254-320 (GANM…DRMD). A coiled-coil region spans residues 326–355 (TQITTILSELEDNMQDVLRRLTTLEQLTAS). A transmembrane helix spans residues 382-404 (SPFTAVLTVLWPFAVHWLVQFYL).

It is found in the membrane. In terms of biological role, binds medium- and long-chain acyl-CoA esters. This chain is Acyl-CoA-binding domain-containing protein 5-B (acbd5b), found in Danio rerio (Zebrafish).